Reading from the N-terminus, the 111-residue chain is Probable 4-amino-4-deoxy-L-arabinose-phosphoundecaprenol flippase subunit ArnE (111 aa).

At 1 to 35 (MIWLTLVFASLLSVAGQLCQKQATCFAAVNKRRKH) the chain is on the cytoplasmic side. Residues 36–56 (IVLWLGLALACLGLAMVLWLL) traverse the membrane as a helical segment. Residues 40–109 (LGLALACLGL…IIGGIVILGS (70 aa)) enclose the EamA domain. Topologically, residues 57 to 60 (VLQN) are periplasmic. The helical transmembrane segment at 61–81 (VPVGIAYPMLSLNFVWVTLAA) threads the bilayer. At 82–87 (VKLWHE) the chain is on the cytoplasmic side. Residues 88-108 (PVSLRHWCGLAFIIGGIVILG) traverse the membrane as a helical segment. The Periplasmic portion of the chain corresponds to 109 to 111 (STV).

Belongs to the ArnE family. In terms of assembly, heterodimer of ArnE and ArnF.

Its subcellular location is the cell inner membrane. Its pathway is bacterial outer membrane biogenesis; lipopolysaccharide biosynthesis. Its function is as follows. Translocates 4-amino-4-deoxy-L-arabinose-phosphoundecaprenol (alpha-L-Ara4N-phosphoundecaprenol) from the cytoplasmic to the periplasmic side of the inner membrane. This chain is Probable 4-amino-4-deoxy-L-arabinose-phosphoundecaprenol flippase subunit ArnE, found in Escherichia coli O81 (strain ED1a).